The chain runs to 1866 residues: Nucleoporin Nup188 (1866 aa).

The protein belongs to the Nup188 family. As to quaternary structure, part of the nuclear pore complex (NPC).

Its subcellular location is the nucleus. It is found in the nuclear pore complex. In terms of biological role, component of the nuclear pore complex (NPC), a complex required for the trafficking across the nuclear envelope. Required for proper protein transport into the nucleus. This chain is Nucleoporin Nup188, found in Drosophila melanogaster (Fruit fly).